A 156-amino-acid polypeptide reads, in one-letter code: MLKITIITLGNKMPDWVNSGVNEYAKRFHDGIQIKLIEIPLLRRNKSSDLARILEKESALTKDALPANARLIALDMLGKSFSSEELALKLTQLQQISSHLCFIIGGPEGLSNEILTLCDERWSLSKLTLPHPLVRIILLESLYRAWSIINNHPYHK.

S-adenosyl-L-methionine contacts are provided by residues leucine 74, glycine 105, and 124–129 (LSKLTL).

This sequence belongs to the RNA methyltransferase RlmH family. In terms of assembly, homodimer.

Its subcellular location is the cytoplasm. It catalyses the reaction pseudouridine(1915) in 23S rRNA + S-adenosyl-L-methionine = N(3)-methylpseudouridine(1915) in 23S rRNA + S-adenosyl-L-homocysteine + H(+). Its function is as follows. Specifically methylates the pseudouridine at position 1915 (m3Psi1915) in 23S rRNA. The chain is Ribosomal RNA large subunit methyltransferase H from Legionella pneumophila (strain Lens).